A 186-amino-acid chain; its full sequence is Large ribosomal subunit protein uL5m (186 aa).

It belongs to the universal ribosomal protein uL5 family.

It localises to the mitochondrion. This Solanum tuberosum (Potato) protein is Large ribosomal subunit protein uL5m (RPL5).